Here is a 368-residue protein sequence, read N- to C-terminus: Endophilin-A2 (368 aa).

The interval 1–21 (MSVAGLKKQFYKASQLVSEKV) is membrane-binding amphipathic helix. Residues 18-249 (SEKVGGAEGT…LKRRVREASS (232 aa)) form the BAR domain. The segment at 60-87 (PNPASRAKLTMLNTVSKIRGQVKNPGYP) is required for dimerization upon membrane association. Positions 180–250 (DEELRQALEK…KRRVREASSR (71 aa)) form a coiled coil. An interaction with ARC region spans residues 218 to 254 (LVDAQLDYHRQAVQILEELADKLKRRVREASSRPKRE). A disordered region spans residues 244-307 (VREASSRPKR…MPSKSMPPLD (64 aa)). The span at 245 to 263 (REASSRPKREFKPRPREPF) shows a compositional bias: basic and acidic residues. A phosphoserine mark is found at S288 and S292. Positions 306 to 365 (LDQPSCKALYDFEPENDGELGFREGDLITLTNQIDENWYEGMLHGQSGFFPLSYVQVLVP) constitute an SH3 domain. Position 315 is a phosphotyrosine (Y315).

The protein belongs to the endophilin family. Interacts with ARC, SYNJ1 and DNM1. Interacts with PDCD6IP. Interacts with BIN2.

The protein localises to the cytoplasm. The protein resides in the early endosome membrane. It is found in the cell projection. It localises to the podosome. Implicated in endocytosis. May recruit other proteins to membranes with high curvature. This chain is Endophilin-A2 (Sh3gl1), found in Mus musculus (Mouse).